Here is a 208-residue protein sequence, read N- to C-terminus: Dual specificity protein phosphatase 22-A (208 aa).

The Tyrosine-protein phosphatase domain maps to G4–S144. C88 functions as the Phosphocysteine intermediate in the catalytic mechanism.

This sequence belongs to the protein-tyrosine phosphatase family. Non-receptor class dual specificity subfamily.

The protein resides in the cytoplasm. Its subcellular location is the nucleus. The enzyme catalyses O-phospho-L-tyrosyl-[protein] + H2O = L-tyrosyl-[protein] + phosphate. It catalyses the reaction O-phospho-L-seryl-[protein] + H2O = L-seryl-[protein] + phosphate. The catalysed reaction is O-phospho-L-threonyl-[protein] + H2O = L-threonyl-[protein] + phosphate. Functionally, activates the Jnk signaling pathway. Dephosphorylates and deactivates p38 and stress-activated protein kinase/c-Jun N-terminal kinase (SAPK/JNK). The polypeptide is Dual specificity protein phosphatase 22-A (Danio rerio (Zebrafish)).